The sequence spans 320 residues: Lipoyl synthase (320 aa).

Residues C67, C72, C78, C93, C97, C100, and S307 each coordinate [4Fe-4S] cluster. A Radical SAM core domain is found at 79 to 296; it reads FNHGTATFMI…GVIAKEIGFT (218 aa).

The protein belongs to the radical SAM superfamily. Lipoyl synthase family. Requires [4Fe-4S] cluster as cofactor.

Its subcellular location is the cytoplasm. It carries out the reaction [[Fe-S] cluster scaffold protein carrying a second [4Fe-4S](2+) cluster] + N(6)-octanoyl-L-lysyl-[protein] + 2 oxidized [2Fe-2S]-[ferredoxin] + 2 S-adenosyl-L-methionine + 4 H(+) = [[Fe-S] cluster scaffold protein] + N(6)-[(R)-dihydrolipoyl]-L-lysyl-[protein] + 4 Fe(3+) + 2 hydrogen sulfide + 2 5'-deoxyadenosine + 2 L-methionine + 2 reduced [2Fe-2S]-[ferredoxin]. The protein operates within protein modification; protein lipoylation via endogenous pathway; protein N(6)-(lipoyl)lysine from octanoyl-[acyl-carrier-protein]: step 2/2. Functionally, catalyzes the radical-mediated insertion of two sulfur atoms into the C-6 and C-8 positions of the octanoyl moiety bound to the lipoyl domains of lipoate-dependent enzymes, thereby converting the octanoylated domains into lipoylated derivatives. The polypeptide is Lipoyl synthase (Pseudoalteromonas atlantica (strain T6c / ATCC BAA-1087)).